The following is a 191-amino-acid chain: MAPDQTSVKGQLIVLTGPSGVGKGTLVQLLLERQPHWFLSISATTRSPRAGEVDGQSYYFLTKEEFQTWIGEEKLLEWAEYAGNYYGTPRQPVEEQIAQGKTVLLEIEVLGARQIKQTFPSARRIFILPPSVEVLEERLRGRGSDSETAIAKRLAQAQQELQAAAEFDYQVVNDDLDQALHRLVKLIGEEE.

The Guanylate kinase-like domain occupies Gly10 to Gly188. Gly17–Gly24 serves as a coordination point for ATP.

Belongs to the guanylate kinase family.

It localises to the cytoplasm. It carries out the reaction GMP + ATP = GDP + ADP. Functionally, essential for recycling GMP and indirectly, cGMP. In Synechocystis sp. (strain ATCC 27184 / PCC 6803 / Kazusa), this protein is Guanylate kinase (gmk).